Here is a 165-residue protein sequence, read N- to C-terminus: Urease accessory protein UreE (165 aa).

This sequence belongs to the UreE family.

Its subcellular location is the cytoplasm. Its function is as follows. Involved in urease metallocenter assembly. Binds nickel. Probably functions as a nickel donor during metallocenter assembly. The chain is Urease accessory protein UreE from Micrococcus luteus (strain ATCC 4698 / DSM 20030 / JCM 1464 / CCM 169 / CCUG 5858 / IAM 1056 / NBRC 3333 / NCIMB 9278 / NCTC 2665 / VKM Ac-2230) (Micrococcus lysodeikticus).